The sequence spans 509 residues: Thymus-specific serine protease (509 aa).

The first 22 residues, 1-22, serve as a signal peptide directing secretion; the sequence is MAVKAPWLGFLLLVSLWGLSTP. N-linked (GlcNAc...) asparagine glycosylation is found at N69 and N171. The active-site Charge relay system is S184. N-linked (GlcNAc...) asparagine glycosylation is present at N320. Active-site charge relay system residues include D446 and H471.

The protein belongs to the peptidase S28 family. In terms of tissue distribution, expressed predominantly in cortical thymic epithelial cells, with highest expression around vessels and the thymic capsule.

It is found in the cytoplasmic vesicle. Functionally, protease that may play a role in T-cell development. This is Thymus-specific serine protease (Prss16) from Mus musculus (Mouse).